The following is a 423-amino-acid chain: COP9 signalosome complex subunit 3 (423 aa).

Ala-2 is modified (N-acetylalanine). The 169-residue stretch at 197–365 (NFERALYFYE…GMVSFHDNPE (169 aa)) folds into the PCI domain. The segment at 402 to 423 (QFVQKSMGSQEDDSGNKPSSYS) is disordered. Phosphoserine occurs at positions 407, 410, and 423.

This sequence belongs to the CSN3 family. In terms of assembly, component of the CSN complex, composed of COPS1/GPS1, COPS2, COPS3, COPS4, COPS5, COPS6, COPS7 (COPS7A or COPS7B), COPS8 and COPS9. In the complex, it probably interacts directly with COPS1, COPS4, COPS8 and COPS9. Interacts with CK2 and PKD. Interacts with the translation initiation factor EIF3S6 and IKBKG. Interacts with ERCC6.

It is found in the cytoplasm. Its subcellular location is the nucleus. Functionally, component of the COP9 signalosome complex (CSN), a complex involved in various cellular and developmental processes. The CSN complex is an essential regulator of the ubiquitin (Ubl) conjugation pathway by mediating the deneddylation of the cullin subunits of SCF-type E3 ligase complexes, leading to decrease the Ubl ligase activity of SCF-type complexes such as SCF, CSA or DDB2. The complex is also involved in phosphorylation of p53/TP53, c-jun/JUN, IkappaBalpha/NFKBIA, ITPK1 and IRF8/ICSBP, possibly via its association with CK2 and PKD kinases. CSN-dependent phosphorylation of TP53 and JUN promotes and protects degradation by the Ubl system, respectively. Essential to maintain the survival of epiblast cells and thus the development of the postimplantation embryo. In Rattus norvegicus (Rat), this protein is COP9 signalosome complex subunit 3 (Cops3).